Here is a 189-residue protein sequence, read N- to C-terminus: Peptidyl-tRNA hydrolase (189 aa).

Residue tyrosine 15 participates in tRNA binding. Histidine 20 acts as the Proton acceptor in catalysis. 3 residues coordinate tRNA: phenylalanine 66, asparagine 68, and asparagine 114.

The protein belongs to the PTH family. As to quaternary structure, monomer.

It is found in the cytoplasm. The catalysed reaction is an N-acyl-L-alpha-aminoacyl-tRNA + H2O = an N-acyl-L-amino acid + a tRNA + H(+). In terms of biological role, hydrolyzes ribosome-free peptidyl-tRNAs (with 1 or more amino acids incorporated), which drop off the ribosome during protein synthesis, or as a result of ribosome stalling. Catalyzes the release of premature peptidyl moieties from peptidyl-tRNA molecules trapped in stalled 50S ribosomal subunits, and thus maintains levels of free tRNAs and 50S ribosomes. This Streptococcus pyogenes serotype M3 (strain ATCC BAA-595 / MGAS315) protein is Peptidyl-tRNA hydrolase.